Consider the following 152-residue polypeptide: Protein SprT-like (152 aa).

The SprT-like domain maps to 6–151 (LQQLVCRISL…SKCLGKLELL (146 aa)). His67 provides a ligand contact to Zn(2+). Glu68 is an active-site residue. His71 contacts Zn(2+).

This sequence belongs to the SprT family. Requires Zn(2+) as cofactor.

The protein resides in the cytoplasm. The sequence is that of Protein SprT-like from Lysinibacillus sphaericus (strain C3-41).